A 304-amino-acid chain; its full sequence is Mas-related G-protein coupled receptor member A (304 aa).

The Extracellular portion of the chain corresponds to M1–N17. Residues L18–L38 form a helical membrane-spanning segment. Topologically, residues G39–A46 are cytoplasmic. A helical membrane pass occupies residues F47 to I67. Topologically, residues D68–N80 are extracellular. The chain crosses the membrane as a helical span at residues I81–M101. The Cytoplasmic segment spans residues L102–C132. A helical membrane pass occupies residues S133–L153. At D154 to N167 the chain is on the extracellular side. The helical transmembrane segment at F168–L188 threads the bilayer. Over L189 to T211 the chain is Cytoplasmic. A helical transmembrane segment spans residues V212–I232. Residues K233–Y244 are Extracellular-facing. Residues L245–V265 form a helical membrane-spanning segment. Residues G266 to P304 lie on the Cytoplasmic side of the membrane.

This sequence belongs to the G-protein coupled receptor 1 family. Mas subfamily. As to expression, expressed in a subset of IB4-positive small diameter nociceptive dorsal root neurons.

It localises to the cell membrane. Its function is as follows. Orphan receptor activated by a subset of RFamide-family neuropeptides such as FLRF-amide and FMRF-amide. Mediates its action by association with G proteins that activate a phosphatidylinositol-calcium second messenger system. Its effect is mediated by G(q) and G(11) proteins. May regulate the function of nociceptive neurons by modulation of pain perception. In Rattus norvegicus (Rat), this protein is Mas-related G-protein coupled receptor member A (Mrgpra).